The primary structure comprises 430 residues: Glial fibrillary acidic protein (430 aa).

Residues 1–31 are disordered; the sequence is MERRRITSARRSYASSETMVRGHGPTRHLGT. The interval 1–70 is head; that stretch reads MERRRITSAR…KETRASERAE (70 aa). Thr-7 carries the post-translational modification Phosphothreonine; by AURKB and ROCK1. Polar residues predominate over residues 9–18; sequence ARRSYASSET. Arg-11 is modified (omega-N-methylarginine). Ser-12 is modified (phosphoserine). Arg-21 is subject to Omega-N-methylarginine. Citrulline is present on Arg-34. Ser-36 is modified (phosphoserine; by AURKB and ROCK1). Thr-41 bears the Phosphothreonine mark. The IF rod domain occupies 67–375; that stretch reads ERAEMMELND…KLLEGEENRI (309 aa). The interval 71–102 is coil 1A; it reads MMELNDRFASYIEKVRFLEQQNKALAAELNQL. A Phosphoserine modification is found at Ser-80. The tract at residues 103–113 is linker 1; sequence RAKEPTKLADV. Residues Thr-108 and Thr-148 each carry the phosphothreonine modification. The tract at residues 114–212 is coil 1B; the sequence is YQAELRELRL…EEEVRELQEQ (99 aa). Positions 213 to 228 are linker 12; that stretch reads LAQQQVHVEMDVAKPD. A coil 2A region spans residues 229–250; it reads LTAALREIRTQYEAVATSNMQE. A linker 2 region spans residues 251–254; it reads TEEW. The coil 2B stretch occupies residues 255-375; the sequence is YRSKFADLTD…KLLEGEENRI (121 aa). Ser-267 carries the phosphoserine modification. Citrulline is present on Arg-268. Ser-321 is modified (phosphoserine). The tail stretch occupies residues 376–430; sequence TIPVQTFSNLQIRETSLDTKSVSEGHLKRNIVVKTVEMRDGEVIKESKQEHKDVM. Thr-381 is subject to Phosphothreonine. Ser-383 carries the post-translational modification Phosphoserine. Arg-404 and Arg-414 each carry citrulline.

The protein belongs to the intermediate filament family. As to quaternary structure, interacts with SYNM. Interacts with PSEN1 (via N-terminus). Post-translationally, phosphorylated by PKN1. Expressed in the cortex and hippocampus. Expression decreases following acute and chronic corticosterone treatment.

The protein localises to the cytoplasm. In terms of biological role, GFAP, a class-III intermediate filament, is a cell-specific marker that, during the development of the central nervous system, distinguishes astrocytes from other glial cells. In Rattus norvegicus (Rat), this protein is Glial fibrillary acidic protein (Gfap).